Consider the following 263-residue polypeptide: Hydroxyethylthiazole kinase (263 aa).

M39 contributes to the substrate binding site. Positions 115 and 160 each coordinate ATP. G187 serves as a coordination point for substrate.

It belongs to the Thz kinase family. Mg(2+) is required as a cofactor.

The catalysed reaction is 5-(2-hydroxyethyl)-4-methylthiazole + ATP = 4-methyl-5-(2-phosphooxyethyl)-thiazole + ADP + H(+). Its pathway is cofactor biosynthesis; thiamine diphosphate biosynthesis; 4-methyl-5-(2-phosphoethyl)-thiazole from 5-(2-hydroxyethyl)-4-methylthiazole: step 1/1. In terms of biological role, catalyzes the phosphorylation of the hydroxyl group of 4-methyl-5-beta-hydroxyethylthiazole (THZ). In Staphylococcus aureus (strain bovine RF122 / ET3-1), this protein is Hydroxyethylthiazole kinase.